We begin with the raw amino-acid sequence, 460 residues long: Argininosuccinate lyase (460 aa).

It belongs to the lyase 1 family. Argininosuccinate lyase subfamily.

It localises to the cytoplasm. It carries out the reaction 2-(N(omega)-L-arginino)succinate = fumarate + L-arginine. It participates in amino-acid biosynthesis; L-arginine biosynthesis; L-arginine from L-ornithine and carbamoyl phosphate: step 3/3. This chain is Argininosuccinate lyase, found in Oleidesulfovibrio alaskensis (strain ATCC BAA-1058 / DSM 17464 / G20) (Desulfovibrio alaskensis).